The primary structure comprises 100 residues: Aspartyl/glutamyl-tRNA(Asn/Gln) amidotransferase subunit C (100 aa).

It belongs to the GatC family. As to quaternary structure, heterotrimer of A, B and C subunits.

The enzyme catalyses L-glutamyl-tRNA(Gln) + L-glutamine + ATP + H2O = L-glutaminyl-tRNA(Gln) + L-glutamate + ADP + phosphate + H(+). It carries out the reaction L-aspartyl-tRNA(Asn) + L-glutamine + ATP + H2O = L-asparaginyl-tRNA(Asn) + L-glutamate + ADP + phosphate + 2 H(+). Its function is as follows. Allows the formation of correctly charged Asn-tRNA(Asn) or Gln-tRNA(Gln) through the transamidation of misacylated Asp-tRNA(Asn) or Glu-tRNA(Gln) in organisms which lack either or both of asparaginyl-tRNA or glutaminyl-tRNA synthetases. The reaction takes place in the presence of glutamine and ATP through an activated phospho-Asp-tRNA(Asn) or phospho-Glu-tRNA(Gln). This chain is Aspartyl/glutamyl-tRNA(Asn/Gln) amidotransferase subunit C, found in Staphylococcus aureus (strain Newman).